The following is a 99-amino-acid chain: NADH-quinone oxidoreductase subunit K (99 aa).

A run of 3 helical transmembrane segments spans residues 3–23 (PANY…GVLV), 28–48 (IVVF…LVTF), and 62–82 (FFVM…ILAI).

The protein belongs to the complex I subunit 4L family. As to quaternary structure, NDH-1 is composed of 14 different subunits. Subunits NuoA, H, J, K, L, M, N constitute the membrane sector of the complex.

The protein resides in the cell membrane. The catalysed reaction is a quinone + NADH + 5 H(+)(in) = a quinol + NAD(+) + 4 H(+)(out). Functionally, NDH-1 shuttles electrons from NADH, via FMN and iron-sulfur (Fe-S) centers, to quinones in the respiratory chain. The immediate electron acceptor for the enzyme in this species is believed to be a menaquinone. Couples the redox reaction to proton translocation (for every two electrons transferred, four hydrogen ions are translocated across the cytoplasmic membrane), and thus conserves the redox energy in a proton gradient. This Parafrankia sp. (strain EAN1pec) protein is NADH-quinone oxidoreductase subunit K.